Consider the following 302-residue polypeptide: tRNA dimethylallyltransferase (302 aa).

9–16 contacts ATP; the sequence is GPTAAGKS. 11 to 16 is a substrate binding site; it reads TAAGKS. Residues 34 to 37 form an interaction with substrate tRNA region; it reads DSRQ.

The protein belongs to the IPP transferase family. In terms of assembly, monomer. It depends on Mg(2+) as a cofactor.

It carries out the reaction adenosine(37) in tRNA + dimethylallyl diphosphate = N(6)-dimethylallyladenosine(37) in tRNA + diphosphate. Catalyzes the transfer of a dimethylallyl group onto the adenine at position 37 in tRNAs that read codons beginning with uridine, leading to the formation of N6-(dimethylallyl)adenosine (i(6)A). In Gloeobacter violaceus (strain ATCC 29082 / PCC 7421), this protein is tRNA dimethylallyltransferase.